Consider the following 125-residue polypeptide: Small ribosomal subunit protein eS8 (125 aa).

Residues 1-20 (MIWQGRSRRKPSGGFYRKAR) are disordered.

The protein belongs to the eukaryotic ribosomal protein eS8 family. Part of the 30S ribosomal subunit.

This chain is Small ribosomal subunit protein eS8 (rps8e), found in Archaeoglobus fulgidus (strain ATCC 49558 / DSM 4304 / JCM 9628 / NBRC 100126 / VC-16).